Here is a 244-residue protein sequence, read N- to C-terminus: Ribosomal RNA small subunit methyltransferase G (244 aa).

Residues Gly-79, Phe-84, 130-131 (AE), and Arg-150 contribute to the S-adenosyl-L-methionine site. Residues 221 to 244 (KKPSPKRYPRKPGTPAKQPLTAPM) are disordered.

It belongs to the methyltransferase superfamily. RNA methyltransferase RsmG family.

Its subcellular location is the cytoplasm. Functionally, specifically methylates the N7 position of a guanine in 16S rRNA. The polypeptide is Ribosomal RNA small subunit methyltransferase G (Lactiplantibacillus plantarum (strain ATCC BAA-793 / NCIMB 8826 / WCFS1) (Lactobacillus plantarum)).